The primary structure comprises 145 residues: Protein SprT-like (145 aa).

The SprT-like domain maps to 4–140; the sequence is TNYVQEVSLA…VCGNCHGKLM (137 aa). Position 64 (H64) interacts with Zn(2+). Residue E65 is part of the active site. H68 is a Zn(2+) binding site.

Belongs to the SprT family. Requires Zn(2+) as cofactor.

The protein localises to the cytoplasm. This Streptococcus pyogenes serotype M3 (strain SSI-1) protein is Protein SprT-like.